The chain runs to 508 residues: Protein FAM227B (508 aa).

Disordered stretches follow at residues methionine 1–proline 22 and alanine 485–tyrosine 508. A compositionally biased stretch (low complexity) spans serine 486–serine 497.

It belongs to the FAM227 family.

In Homo sapiens (Human), this protein is Protein FAM227B (FAM227B).